We begin with the raw amino-acid sequence, 368 residues long: Agmatine deiminase (368 aa).

Cys-357 serves as the catalytic Amidino-cysteine intermediate.

Belongs to the agmatine deiminase family. Homodimer.

It carries out the reaction agmatine + H2O = N-carbamoylputrescine + NH4(+). The protein operates within amine and polyamine biosynthesis; putrescine biosynthesis via agmatine pathway; N-carbamoylputrescine from agmatine: step 1/1. Its function is as follows. Mediates the hydrolysis of agmatine into N-carbamoylputrescine in the arginine decarboxylase (ADC) pathway of putrescine biosynthesis, a basic polyamine. This Stutzerimonas stutzeri (strain A1501) (Pseudomonas stutzeri) protein is Agmatine deiminase.